Here is a 313-residue protein sequence, read N- to C-terminus: tRNA dimethylallyltransferase (313 aa).

An ATP-binding site is contributed by 11–18 (GPTAGGKT). 13–18 (TAGGKT) lines the substrate pocket. Interaction with substrate tRNA stretches follow at residues 36-39 (DSAL), 160-164 (QRIGR), and 243-248 (RCVGYR).

This sequence belongs to the IPP transferase family. As to quaternary structure, monomer. The cofactor is Mg(2+).

It carries out the reaction adenosine(37) in tRNA + dimethylallyl diphosphate = N(6)-dimethylallyladenosine(37) in tRNA + diphosphate. Functionally, catalyzes the transfer of a dimethylallyl group onto the adenine at position 37 in tRNAs that read codons beginning with uridine, leading to the formation of N6-(dimethylallyl)adenosine (i(6)A). The chain is tRNA dimethylallyltransferase from Neisseria meningitidis serogroup B (strain ATCC BAA-335 / MC58).